The sequence spans 644 residues: 3D-(3,5/4)-trihydroxycyclohexane-1,2-dione hydrolase 2 (644 aa).

Glu-65 is a binding site for thiamine diphosphate. The tract at residues Ser-442–Gly-522 is thiamine pyrophosphate binding. Residues Asp-493 and Asn-520 each coordinate Mg(2+).

This sequence belongs to the TPP enzyme family. Mg(2+) serves as cofactor. It depends on thiamine diphosphate as a cofactor.

The enzyme catalyses 3D-3,5/4-trihydroxycyclohexane-1,2-dione + H2O = 5-deoxy-D-glucuronate + H(+). It functions in the pathway polyol metabolism; myo-inositol degradation into acetyl-CoA; acetyl-CoA from myo-inositol: step 3/7. Involved in the cleavage of the C1-C2 bond of 3D-(3,5/4)-trihydroxycyclohexane-1,2-dione (THcHDO) to yield 5-deoxy-glucuronate (5DG). This chain is 3D-(3,5/4)-trihydroxycyclohexane-1,2-dione hydrolase 2, found in Bacillus cereus (strain ZK / E33L).